A 561-amino-acid polypeptide reads, in one-letter code: MGVWKSMVWGVLLWHSQSGAICPVWPSARTIEEIARLQQQLADWNDIYWKQGVSAVDDSVYDQLSAKLVQWQRCVGQDVSSTPVSPPLNGTTTHPVAHTGVRKLADRQAVAQWMRGHSEFWVQPKVDGVAVTLVYQNGKLTRAISRGNGLQGEDWTQKIRQISSIPQTTRGALANAVLQGEIFLQLKGHIQQRMGGMNARSKVAGMLMRQKNTSALNSLGIFIWAWPDGPANMTERLSQLAKAGFSLTQKYSQMVKNASEVERARRSWLTSALPFVTDGVVIRMAKEPSSQYWRPGQGDWLAAWKYPPVAQVAQVSAIQFSVGKSGKISVIASLVPVMLDDKRVKRVNIGSVKRWEAWDIAPGDQILVSLAGQGIPRLDEVVWRSRERSKPVPPGNHFNSLTCFYASATCQEQFISRLVWLGSRAALGLDGMGEASWRALHQTHRFEHIFSWLALTPAEIANTPGFAKGKSELIWRQFNLARRQPFSRWVMAMDIPLTQAALQASGDRSWEQLLMRTDQHWRQLPATGERRAGRVSDWRDNPRIKALSRWLAAQHIPGFGT.

Lys-125 (N6-AMP-lysine intermediate) is an active-site residue.

It belongs to the NAD-dependent DNA ligase family. LigB subfamily.

It carries out the reaction NAD(+) + (deoxyribonucleotide)n-3'-hydroxyl + 5'-phospho-(deoxyribonucleotide)m = (deoxyribonucleotide)n+m + AMP + beta-nicotinamide D-nucleotide.. Its function is as follows. Catalyzes the formation of phosphodiester linkages between 5'-phosphoryl and 3'-hydroxyl groups in double-stranded DNA using NAD as a coenzyme and as the energy source for the reaction. The chain is DNA ligase B from Salmonella arizonae (strain ATCC BAA-731 / CDC346-86 / RSK2980).